The sequence spans 427 residues: Glutamate-1-semialdehyde 2,1-aminomutase (427 aa).

Lys-265 is subject to N6-(pyridoxal phosphate)lysine.

It belongs to the class-III pyridoxal-phosphate-dependent aminotransferase family. HemL subfamily. As to quaternary structure, homodimer. Requires pyridoxal 5'-phosphate as cofactor.

Its subcellular location is the cytoplasm. The enzyme catalyses (S)-4-amino-5-oxopentanoate = 5-aminolevulinate. Its pathway is porphyrin-containing compound metabolism; protoporphyrin-IX biosynthesis; 5-aminolevulinate from L-glutamyl-tRNA(Glu): step 2/2. The chain is Glutamate-1-semialdehyde 2,1-aminomutase from Burkholderia ambifaria (strain MC40-6).